The sequence spans 271 residues: Shikimate dehydrogenase (NADP(+)) (271 aa).

Residues 14–16 (SLS) and threonine 61 contribute to the shikimate site. Residue lysine 65 is the Proton acceptor of the active site. The shikimate site is built by asparagine 86 and aspartate 101. NADP(+) is bound by residues 125 to 129 (GAGGA) and isoleucine 212. Position 214 (tyrosine 214) interacts with shikimate. Glycine 235 contributes to the NADP(+) binding site.

Belongs to the shikimate dehydrogenase family. Homodimer.

The catalysed reaction is shikimate + NADP(+) = 3-dehydroshikimate + NADPH + H(+). Its pathway is metabolic intermediate biosynthesis; chorismate biosynthesis; chorismate from D-erythrose 4-phosphate and phosphoenolpyruvate: step 4/7. In terms of biological role, involved in the biosynthesis of the chorismate, which leads to the biosynthesis of aromatic amino acids. Catalyzes the reversible NADPH linked reduction of 3-dehydroshikimate (DHSA) to yield shikimate (SA). This is Shikimate dehydrogenase (NADP(+)) from Clostridium perfringens (strain 13 / Type A).